The primary structure comprises 502 residues: ATP synthase subunit alpha (502 aa).

Residue 169 to 176 (GDRQVGKT) coordinates ATP.

It belongs to the ATPase alpha/beta chains family. In terms of assembly, F-type ATPases have 2 components, CF(1) - the catalytic core - and CF(0) - the membrane proton channel. CF(1) has five subunits: alpha(3), beta(3), gamma(1), delta(1), epsilon(1). CF(0) has three main subunits: a(1), b(2) and c(9-12). The alpha and beta chains form an alternating ring which encloses part of the gamma chain. CF(1) is attached to CF(0) by a central stalk formed by the gamma and epsilon chains, while a peripheral stalk is formed by the delta and b chains.

It localises to the cell membrane. It carries out the reaction ATP + H2O + 4 H(+)(in) = ADP + phosphate + 5 H(+)(out). Functionally, produces ATP from ADP in the presence of a proton gradient across the membrane. The alpha chain is a regulatory subunit. This Lysinibacillus sphaericus (strain C3-41) protein is ATP synthase subunit alpha.